We begin with the raw amino-acid sequence, 358 residues long: MVDAQLTDLYGTVVAVQANFYQVRLDSAVMGENLLCTRRARLQKIGQSVMVGDRVRVEEANFGDQQGAIAEVLPRSTEIDRPAVANIEQILLVFALAEPVLDPWLISRFLVKAESTGLEIAVCVNKIDLGEPEQIEVWGDRLAGWGYRPFFVSVEKNRGFEALLAQLNHKITLLAGPSGVGKSSLINCLIPEINQRVGDVSGKLQKGRHTTRHVQLFALPNRGLLADSPGFNQPDINCLPEELTFYFPEVRARLALGNCQFNDCTHRREPNCVVRGDWERYQHYLEFLEEAIAREQSLQKTSTKESSLKLKIKEAGQETYEPKLANKKYRRPSRRGKNQDQERYENKTLQDIYNDDSE.

A CP-type G domain is found at 76–234; sequence STEIDRPAVA…LADSPGFNQP (159 aa). Residues 125–128 and 176–184 each bind GTP; these read NKID and GPSGVGKSS. Residues cysteine 259, cysteine 264, histidine 266, and cysteine 272 each contribute to the Zn(2+) site. The segment at 319–358 is disordered; sequence TYEPKLANKKYRRPSRRGKNQDQERYENKTLQDIYNDDSE. Residues 325 to 336 are compositionally biased toward basic residues; sequence ANKKYRRPSRRG. The span at 337–348 shows a compositional bias: basic and acidic residues; that stretch reads KNQDQERYENKT.

Belongs to the TRAFAC class YlqF/YawG GTPase family. RsgA subfamily. As to quaternary structure, monomer. Associates with 30S ribosomal subunit, binds 16S rRNA. Zn(2+) is required as a cofactor.

The protein resides in the cytoplasm. Functionally, one of several proteins that assist in the late maturation steps of the functional core of the 30S ribosomal subunit. Helps release RbfA from mature subunits. May play a role in the assembly of ribosomal proteins into the subunit. Circularly permuted GTPase that catalyzes slow GTP hydrolysis, GTPase activity is stimulated by the 30S ribosomal subunit. This chain is Small ribosomal subunit biogenesis GTPase RsgA, found in Microcystis aeruginosa (strain NIES-843 / IAM M-2473).